The following is a 235-amino-acid chain: MKDLLQYAACFLAIFSTGFLIVATRTDCWMVNADDSLEVSTKCRGLWWECVTNAFDGIRTCDEYDSIYAEHPLKLVVTRALMITADILAGFGFITLLLGLDCVKFLPDEPHIKVRLCFVAGTVLLIAGTPGIIGSVWYAVDVYVERSSLVLHNIFLGIQYKFGWSCWLGMAGSLGCFLAGALLTCCLYLFKDVGPERNYPYAMRKPYSTAGVSMAKSYKAPRTETAKMYAVDTRV.

Over 1–3 (MKD) the chain is Cytoplasmic. A helical transmembrane segment spans residues 4-24 (LLQYAACFLAIFSTGFLIVAT). At 25–79 (RTDCWMVNADDSLEVSTKCRGLWWECVTNAFDGIRTCDEYDSIYAEHPLKLVVTR) the chain is on the extracellular side. The helical transmembrane segment at 80–100 (ALMITADILAGFGFITLLLGL) threads the bilayer. Over 101–115 (DCVKFLPDEPHIKVR) the chain is Cytoplasmic. The helical transmembrane segment at 116-136 (LCFVAGTVLLIAGTPGIIGSV) threads the bilayer. Over 137–169 (WYAVDVYVERSSLVLHNIFLGIQYKFGWSCWLG) the chain is Extracellular. The chain crosses the membrane as a helical span at residues 170–190 (MAGSLGCFLAGALLTCCLYLF). At 191-235 (KDVGPERNYPYAMRKPYSTAGVSMAKSYKAPRTETAKMYAVDTRV) the chain is on the cytoplasmic side. Residues 233–235 (TRV) carry the Interaction with TJP1 motif.

It belongs to the claudin family. Can form heteropolymeric tight junction strands with other claudins. Interacts with CLDN19. Interacts (via PDZ-binding motif TRV) with TJP1 (via PDZ domain). Cannot form tight junction strands on its own.

It localises to the cell junction. It is found in the tight junction. Its subcellular location is the cell membrane. The enzyme catalyses Mg(2+)(in) = Mg(2+)(out). It carries out the reaction Ca(2+)(in) = Ca(2+)(out). The catalysed reaction is Na(+)(in) = Na(+)(out). It catalyses the reaction K(+)(in) = K(+)(out). The enzyme catalyses Rb(+)(in) = Rb(+)(out). It carries out the reaction Cs(+)(in) = Cs(+)(out). The catalysed reaction is Li(+)(in) = Li(+)(out). Its function is as follows. Forms paracellular channels: coassembles with CLDN19 into tight junction strands with cation-selective channels through the strands, conveying epithelial permeability in a process known as paracellular tight junction permeability. Involved in the maintenance of ion gradients along the nephron. In the thick ascending limb (TAL) of Henle's loop, facilitates sodium paracellular permeability from the interstitial compartment to the lumen, contributing to the lumen-positive transepithelial potential that drives paracellular magnesium and calcium reabsorption. The chain is Claudin-16 from Rattus norvegicus (Rat).